The sequence spans 279 residues: Fructose-1,6-bisphosphatase class 1 (279 aa).

Mg(2+) is bound by residues Glu65, Asp85, Leu87, and Asp88. Substrate-binding positions include 88–91 (DGSS), Tyr190, and Lys221. Residue Glu227 coordinates Mg(2+).

This sequence belongs to the FBPase class 1 family. Homotetramer. Mg(2+) serves as cofactor.

The protein resides in the cytoplasm. It carries out the reaction beta-D-fructose 1,6-bisphosphate + H2O = beta-D-fructose 6-phosphate + phosphate. Its pathway is carbohydrate biosynthesis; gluconeogenesis. This chain is Fructose-1,6-bisphosphatase class 1, found in Helicobacter hepaticus (strain ATCC 51449 / 3B1).